The following is a 1407-amino-acid chain: DNA-directed RNA polymerase subunit beta' (1407 aa).

Zn(2+) is bound by residues cysteine 70, cysteine 72, cysteine 85, and cysteine 88. Mg(2+)-binding residues include aspartate 460, aspartate 462, and aspartate 464. Positions 814, 888, 895, and 898 each coordinate Zn(2+).

This sequence belongs to the RNA polymerase beta' chain family. In terms of assembly, the RNAP catalytic core consists of 2 alpha, 1 beta, 1 beta' and 1 omega subunit. When a sigma factor is associated with the core the holoenzyme is formed, which can initiate transcription. The cofactor is Mg(2+). Zn(2+) is required as a cofactor.

The enzyme catalyses RNA(n) + a ribonucleoside 5'-triphosphate = RNA(n+1) + diphosphate. DNA-dependent RNA polymerase catalyzes the transcription of DNA into RNA using the four ribonucleoside triphosphates as substrates. The sequence is that of DNA-directed RNA polymerase subunit beta' from Buchnera aphidicola subsp. Acyrthosiphon pisum (strain APS) (Acyrthosiphon pisum symbiotic bacterium).